A 390-amino-acid polypeptide reads, in one-letter code: Phosphoglycerate kinase (390 aa).

Residues 21–23 (DLN), R36, 59–62 (HLGR), R114, and R147 contribute to the substrate site. Residues K198, E314, and 340–343 (GGDT) contribute to the ATP site.

The protein belongs to the phosphoglycerate kinase family. In terms of assembly, monomer.

The protein localises to the cytoplasm. The enzyme catalyses (2R)-3-phosphoglycerate + ATP = (2R)-3-phospho-glyceroyl phosphate + ADP. It participates in carbohydrate degradation; glycolysis; pyruvate from D-glyceraldehyde 3-phosphate: step 2/5. This is Phosphoglycerate kinase (pgk) from Buchnera aphidicola subsp. Acyrthosiphon pisum (strain APS) (Acyrthosiphon pisum symbiotic bacterium).